We begin with the raw amino-acid sequence, 349 residues long: Anthranilate phosphoribosyltransferase (349 aa).

Residues Gly82, 85-86 (GD), 92-95 (NVST), 110-118 (KHGNRGVSS), and Ser122 each bind 5-phospho-alpha-D-ribose 1-diphosphate. Residue Gly82 participates in anthranilate binding. Ser94 lines the Mg(2+) pocket. An anthranilate-binding site is contributed by Asn113. Residue Arg168 coordinates anthranilate. Residues Asp227 and Glu228 each coordinate Mg(2+).

This sequence belongs to the anthranilate phosphoribosyltransferase family. Homodimer. Mg(2+) is required as a cofactor.

It catalyses the reaction N-(5-phospho-beta-D-ribosyl)anthranilate + diphosphate = 5-phospho-alpha-D-ribose 1-diphosphate + anthranilate. It participates in amino-acid biosynthesis; L-tryptophan biosynthesis; L-tryptophan from chorismate: step 2/5. Its function is as follows. Catalyzes the transfer of the phosphoribosyl group of 5-phosphorylribose-1-pyrophosphate (PRPP) to anthranilate to yield N-(5'-phosphoribosyl)-anthranilate (PRA). The polypeptide is Anthranilate phosphoribosyltransferase (Acinetobacter baylyi (strain ATCC 33305 / BD413 / ADP1)).